The primary structure comprises 376 residues: Succinyl-diaminopimelate desuccinylase 1 (376 aa).

His-67 is a Zn(2+) binding site. Asp-69 is a catalytic residue. Position 100 (Asp-100) interacts with Zn(2+). Glu-134 functions as the Proton acceptor in the catalytic mechanism. Positions 135, 163, and 349 each coordinate Zn(2+).

The protein belongs to the peptidase M20A family. DapE subfamily. In terms of assembly, homodimer. Requires Zn(2+) as cofactor. Co(2+) serves as cofactor.

The catalysed reaction is N-succinyl-(2S,6S)-2,6-diaminopimelate + H2O = (2S,6S)-2,6-diaminopimelate + succinate. It functions in the pathway amino-acid biosynthesis; L-lysine biosynthesis via DAP pathway; LL-2,6-diaminopimelate from (S)-tetrahydrodipicolinate (succinylase route): step 3/3. Catalyzes the hydrolysis of N-succinyl-L,L-diaminopimelic acid (SDAP), forming succinate and LL-2,6-diaminopimelate (DAP), an intermediate involved in the bacterial biosynthesis of lysine and meso-diaminopimelic acid, an essential component of bacterial cell walls. The chain is Succinyl-diaminopimelate desuccinylase 1 from Shewanella loihica (strain ATCC BAA-1088 / PV-4).